The following is a 196-amino-acid chain: MIRELFEKEGFTLDEEQERKFSIYLQELLRWNKVHNLTSIKKPEEIVRRHFIDSVSVVRCFERIGLDLRGKHFADVGSGAGFPGVPLKIYLKDIKLTLIESVSKKCSFLEYLKIKLNEDYRVLCTRAEKVEEKFDVVLARALGEFEEVKEILEKLSIGYVFVYKGSKLKEEWLKDYKLCELSLSFMPKSYILWKKV.

S-adenosyl-L-methionine-binding positions include G77, F82, 127–128 (AE), and R140.

It belongs to the methyltransferase superfamily. RNA methyltransferase RsmG family.

It is found in the cytoplasm. Specifically methylates the N7 position of a guanine in 16S rRNA. In Aquifex aeolicus (strain VF5), this protein is Ribosomal RNA small subunit methyltransferase G.